Consider the following 671-residue polypeptide: Synaptotagmin-like protein 4 (671 aa).

The 119-residue stretch at leucine 4–glutamine 122 folds into the RabBD domain. An FYVE-type zinc finger spans residues cysteine 63 to cysteine 105. The segment at serine 199–proline 243 is disordered. 6 positions are modified to phosphoserine: serine 201, serine 204, serine 217, serine 221, serine 274, and serine 289. The C2 1 domain maps to valine 356–leucine 478. Serine 488 carries the phosphoserine modification. One can recognise a C2 2 domain in the interval proline 507 to methionine 633.

In terms of assembly, part of a ternary complex containing STX1A and RAB27A. Can bind both dominant negative and dominant active mutants of RAB27A. Binds STXBP1, RAB3A, RAB8A and RAB27B. Interacts with MYO5A.

It is found in the membrane. The protein resides in the cell membrane. It localises to the cytoplasmic vesicle. The protein localises to the secretory vesicle membrane. Modulates exocytosis of dense-core granules and secretion of hormones in the pancreas and the pituitary. Interacts with vesicles containing negatively charged phospholipids in a Ca(2+)-independent manner. The protein is Synaptotagmin-like protein 4 (SYTL4) of Homo sapiens (Human).